Here is a 461-residue protein sequence, read N- to C-terminus: RCC1-like G exchanging factor-like protein (461 aa).

Positions M1–G10 are enriched in low complexity. The transit peptide at M1–E34 directs the protein to the mitochondrion. Residues M1–A35 are disordered. 7 RCC1 repeats span residues A55 to K121, V125 to D188, E190 to D244, K245 to A297, D298 to A350, G352 to N408, and K409 to K458.

In terms of assembly, forms a regulatory protein-RNA complex, consisting of RCC1L, NGRN, RPUSD3, RPUSD4, TRUB2, FASTKD2 and 16S mt-rRNA. Interacts with 16S mt-rRNA; this interaction is direct. Interacts with OPA1; this interaction is direct. In terms of tissue distribution, at E8.5, broadly expressed in yolk sac placenta, decidua, and embryo, with highest levels found in the trophoblast giant cells (TGCs) and ectoplacental cone (at protein level).

Its subcellular location is the mitochondrion inner membrane. Functionally, guanine nucleotide exchange factor (GEF) for mitochondrial dynamin-related GTPase OPA1. Activates OPA1, by exchanging bound GDP for free GTP, and drives OPA1 and MFN1-dependent mitochondrial fusion. Plays an essential role in mitochondrial ribosome biogenesis. As a component of a functional protein-RNA module, consisting of RCC1L, NGRN, RPUSD3, RPUSD4, TRUB2, FASTKD2 and 16S mitochondrial ribosomal RNA (16S mt-rRNA), controls 16S mt-rRNA abundance and is required for intra-mitochondrial translation of core subunits of the oxidative phosphorylation system. In Mus musculus (Mouse), this protein is RCC1-like G exchanging factor-like protein.